A 290-amino-acid chain; its full sequence is UPF0761 membrane protein YihY (290 aa).

Helical transmembrane passes span 44–64, 104–124, 140–160, 183–203, 210–230, and 244–264; these read LLSL…FPMF, VGAC…DSAL, FAVY…SLAI, ILPL…VPTT, ALVG…GFAL, and VLAV…IVLL.

It belongs to the UPF0761 family.

It localises to the cell inner membrane. In Salmonella agona (strain SL483), this protein is UPF0761 membrane protein YihY.